The following is a 181-amino-acid chain: Cytochrome c oxidase subunit 2 (181 aa).

Cu cation-binding residues include Cys-126, Glu-128, Cys-130, His-134, and Met-137. Glu-128 is a Mg(2+) binding site.

This sequence belongs to the cytochrome c oxidase subunit 2 family. As to quaternary structure, component of the cytochrome c oxidase (complex IV, CIV), a multisubunit enzyme composed of a catalytic core of 3 subunits and several supernumerary subunits. The complex exists as a monomer or a dimer and forms supercomplexes (SCs) in the inner mitochondrial membrane with ubiquinol-cytochrome c oxidoreductase (cytochrome b-c1 complex, complex III, CIII). The cofactor is Cu cation.

The protein resides in the mitochondrion inner membrane. The enzyme catalyses 4 Fe(II)-[cytochrome c] + O2 + 8 H(+)(in) = 4 Fe(III)-[cytochrome c] + 2 H2O + 4 H(+)(out). Its function is as follows. Component of the cytochrome c oxidase, the last enzyme in the mitochondrial electron transport chain which drives oxidative phosphorylation. The respiratory chain contains 3 multisubunit complexes succinate dehydrogenase (complex II, CII), ubiquinol-cytochrome c oxidoreductase (cytochrome b-c1 complex, complex III, CIII) and cytochrome c oxidase (complex IV, CIV), that cooperate to transfer electrons derived from NADH and succinate to molecular oxygen, creating an electrochemical gradient over the inner membrane that drives transmembrane transport and the ATP synthase. Cytochrome c oxidase is the component of the respiratory chain that catalyzes the reduction of oxygen to water. Electrons originating from reduced cytochrome c in the intermembrane space (IMS) are transferred via the dinuclear copper A center (CU(A)) of subunit 2 and heme A of subunit 1 to the active site in subunit 1, a binuclear center (BNC) formed by heme A3 and copper B (CU(B)). The BNC reduces molecular oxygen to 2 water molecules using 4 electrons from cytochrome c in the IMS and 4 protons from the mitochondrial matrix. The chain is Cytochrome c oxidase subunit 2 (COII) from Paramecium primaurelia.